The chain runs to 432 residues: Putative D-alanyl-D-alanine carboxypeptidase (432 aa).

A helical; Signal-anchor transmembrane segment spans residues 7–25; the sequence is ATVLLTFSLSAFAVEYPVL.

Belongs to the peptidase S12 family. YfeW subfamily.

Its subcellular location is the cell inner membrane. The enzyme catalyses Preferential cleavage: (Ac)2-L-Lys-D-Ala-|-D-Ala. Also transpeptidation of peptidyl-alanyl moieties that are N-acyl substituents of D-alanine.. This chain is Putative D-alanyl-D-alanine carboxypeptidase, found in Salmonella paratyphi A (strain ATCC 9150 / SARB42).